A 72-amino-acid chain; its full sequence is uncharacterized protein (72 aa).

This is an uncharacterized protein from Mycobacterium tuberculosis (strain ATCC 25618 / H37Rv).